A 153-amino-acid polypeptide reads, in one-letter code: UPF0756 membrane protein Lm4b_01579 (153 aa).

Helical transmembrane passes span 6–26 (MLFL…SLII), 54–74 (WGVT…QIGF), 80–100 (SFKS…SILA), and 117–137 (LVFG…GPVI).

Belongs to the UPF0756 family.

The protein resides in the cell membrane. This Listeria monocytogenes serotype 4b (strain CLIP80459) protein is UPF0756 membrane protein Lm4b_01579.